The primary structure comprises 482 residues: Adenylosuccinate lyase (482 aa).

Substrate-binding positions include 14-15, 82-84, and 108-109; these read RY, RHD, and TS. The active-site Proton donor/acceptor is histidine 156. A Glycyl lysine isopeptide (Lys-Gly) (interchain with G-Cter in ubiquitin) cross-link involves residue lysine 196. Glutamine 238 contacts substrate. The active-site Proton donor/acceptor is serine 286. Substrate contacts are provided by arginine 300, arginine 326, serine 331, and arginine 335.

It belongs to the lyase 1 family. Adenylosuccinate lyase subfamily. As to quaternary structure, homotetramer. Residues from neighboring subunits contribute catalytic and substrate-binding residues to each active site.

It catalyses the reaction N(6)-(1,2-dicarboxyethyl)-AMP = fumarate + AMP. The catalysed reaction is (2S)-2-[5-amino-1-(5-phospho-beta-D-ribosyl)imidazole-4-carboxamido]succinate = 5-amino-1-(5-phospho-beta-D-ribosyl)imidazole-4-carboxamide + fumarate. The protein operates within purine metabolism; AMP biosynthesis via de novo pathway; AMP from IMP: step 2/2. It participates in purine metabolism; IMP biosynthesis via de novo pathway; 5-amino-1-(5-phospho-D-ribosyl)imidazole-4-carboxamide from 5-amino-1-(5-phospho-D-ribosyl)imidazole-4-carboxylate: step 2/2. This Saccharomyces cerevisiae (strain ATCC 204508 / S288c) (Baker's yeast) protein is Adenylosuccinate lyase (ADE13).